The primary structure comprises 163 residues: D-aminoacyl-tRNA deacylase (163 aa).

A Gly-cisPro motif, important for rejection of L-amino acids motif is present at residues 141–142; the sequence is GP.

It belongs to the DTD family. In terms of assembly, homodimer.

The protein localises to the cytoplasm. The enzyme catalyses glycyl-tRNA(Ala) + H2O = tRNA(Ala) + glycine + H(+). It catalyses the reaction a D-aminoacyl-tRNA + H2O = a tRNA + a D-alpha-amino acid + H(+). An aminoacyl-tRNA editing enzyme that deacylates mischarged D-aminoacyl-tRNAs. Also deacylates mischarged glycyl-tRNA(Ala), protecting cells against glycine mischarging by AlaRS. Acts via tRNA-based rather than protein-based catalysis; rejects L-amino acids rather than detecting D-amino acids in the active site. By recycling D-aminoacyl-tRNA to D-amino acids and free tRNA molecules, this enzyme counteracts the toxicity associated with the formation of D-aminoacyl-tRNA entities in vivo and helps enforce protein L-homochirality. The chain is D-aminoacyl-tRNA deacylase from Neisseria gonorrhoeae (strain ATCC 700825 / FA 1090).